Reading from the N-terminus, the 253-residue chain is N-acetylglucosaminyl-phosphatidylinositol de-N-acetylase (253 aa).

The chain crosses the membrane as a helical span at residues 3–23; sequence VAAPLLCLAAAVLVWGVLWVW. Residues 24 to 253 are Cytoplasmic-facing; that stretch reads GSWERMTRPE…YMRINSLNFL (230 aa).

It belongs to the PIGL family.

It is found in the endoplasmic reticulum membrane. It catalyses the reaction a 6-(N-acetyl-alpha-D-glucosaminyl)-1-(1,2-diacyl-sn-glycero-3-phospho)-1D-myo-inositol + H2O = a 6-(alpha-D-glucosaminyl)-1-(1,2-diacyl-sn-glycero-3-phospho)-1D-myo-inositol + acetate. The protein operates within glycolipid biosynthesis; glycosylphosphatidylinositol-anchor biosynthesis. Catalyzes the second step of glycosylphosphatidylinositol (GPI) biosynthesis, which is the de-N-acetylation of N-acetylglucosaminyl-phosphatidylinositol. This Bos taurus (Bovine) protein is N-acetylglucosaminyl-phosphatidylinositol de-N-acetylase (PIGL).